The primary structure comprises 234 residues: Large ribosomal subunit protein uL1 (234 aa).

It belongs to the universal ribosomal protein uL1 family. Part of the 50S ribosomal subunit.

Binds directly to 23S rRNA. The L1 stalk is quite mobile in the ribosome, and is involved in E site tRNA release. Functionally, protein L1 is also a translational repressor protein, it controls the translation of the L11 operon by binding to its mRNA. This chain is Large ribosomal subunit protein uL1, found in Desulfosudis oleivorans (strain DSM 6200 / JCM 39069 / Hxd3) (Desulfococcus oleovorans).